Consider the following 299-residue polypeptide: S-fimbrial protein subunit SfaH (299 aa).

The protein belongs to the fimbrial protein family.

It localises to the fimbrium. Fimbriae (also called pili), polar filaments radiating from the surface of the bacterium to a length of 0.5-1.5 micrometers and numbering 100-300 per cell, enable bacteria to colonize the epithelium of specific host organs. Functionally, a minor fimbrial subunit. This protein is necessary for full expression of S-specific binding. S-fimbrial adhesins enable pathogenic E.coli causing urinary-tract infections or newborn meningitis to attach to glycoproteins terminating with alpha-sialic acid-(2-3)-beta-Gal. This chain is S-fimbrial protein subunit SfaH (sfaH), found in Escherichia coli O6:K15:H31 (strain 536 / UPEC).